Here is a 392-residue protein sequence, read N- to C-terminus: 4-hydroxybenzoate polyprenyltransferase, mitochondrial (392 aa).

Residues 1–22 (MYALRHLRLQSARHFRSSYAAA) constitute a mitochondrion transit peptide. 9 consecutive transmembrane segments (helical) span residues 90-110 (IGTY…ADAG), 115-135 (LTML…GCTI), 163-183 (FDAI…LVQL), 184-204 (NWQS…YPLM), 207-227 (VTYW…LLGW), 236-256 (LAAC…YDTI), 283-303 (VWLS…GWAC), 307-327 (VPYY…IYSL), and 339-359 (FISN…GTLL). The disordered stretch occupies residues 365–392 (KKQRQSSLTTSTASSYVPALPQKPEVLS). The segment covering 369-379 (QSSLTTSTASS) has biased composition (polar residues).

This sequence belongs to the UbiA prenyltransferase family. It depends on Mg(2+) as a cofactor.

The protein localises to the mitochondrion inner membrane. The enzyme catalyses an all-trans-polyprenyl diphosphate + 4-hydroxybenzoate = a 4-hydroxy-3-(all-trans-polyprenyl)benzoate + diphosphate. Its pathway is cofactor biosynthesis; ubiquinone biosynthesis. Catalyzes the prenylation of para-hydroxybenzoate (PHB) with an all-trans polyprenyl group. Mediates the second step in the final reaction sequence of coenzyme Q (CoQ) biosynthesis, which is the condensation of the polyisoprenoid side chain with PHB, generating the first membrane-bound Q intermediate. This chain is 4-hydroxybenzoate polyprenyltransferase, mitochondrial, found in Drosophila melanogaster (Fruit fly).